The sequence spans 357 residues: Protein-glutamate methylesterase/protein-glutamine glutaminase 1 (357 aa).

A Response regulatory domain is found at 10–127; sequence RTLIVDDSAF…DVNKIEKELV (118 aa). At aspartate 61 the chain carries 4-aspartylphosphate. The region spanning 159-353 is the CheB-type methylesterase domain; it reads SCAGDFAVLI…EEIVRMSEVK (195 aa). Catalysis depends on residues serine 171, histidine 198, and aspartate 295.

The protein belongs to the CheB family. Post-translationally, phosphorylated by CheA. Phosphorylation of the N-terminal regulatory domain activates the methylesterase activity.

The protein resides in the cytoplasm. The enzyme catalyses [protein]-L-glutamate 5-O-methyl ester + H2O = L-glutamyl-[protein] + methanol + H(+). It catalyses the reaction L-glutaminyl-[protein] + H2O = L-glutamyl-[protein] + NH4(+). Its function is as follows. Involved in chemotaxis. Part of a chemotaxis signal transduction system that modulates chemotaxis in response to various stimuli. Catalyzes the demethylation of specific methylglutamate residues introduced into the chemoreceptors (methyl-accepting chemotaxis proteins or MCP) by CheR. Also mediates the irreversible deamidation of specific glutamine residues to glutamic acid. The polypeptide is Protein-glutamate methylesterase/protein-glutamine glutaminase 1 (Methanosarcina mazei (strain ATCC BAA-159 / DSM 3647 / Goe1 / Go1 / JCM 11833 / OCM 88) (Methanosarcina frisia)).